The chain runs to 383 residues: ATP phosphoribosyltransferase regulatory subunit (383 aa).

Belongs to the class-II aminoacyl-tRNA synthetase family. HisZ subfamily. As to quaternary structure, heteromultimer composed of HisG and HisZ subunits.

Its subcellular location is the cytoplasm. It participates in amino-acid biosynthesis; L-histidine biosynthesis; L-histidine from 5-phospho-alpha-D-ribose 1-diphosphate: step 1/9. Functionally, required for the first step of histidine biosynthesis. May allow the feedback regulation of ATP phosphoribosyltransferase activity by histidine. In Lactiplantibacillus plantarum (strain ATCC BAA-793 / NCIMB 8826 / WCFS1) (Lactobacillus plantarum), this protein is ATP phosphoribosyltransferase regulatory subunit.